The primary structure comprises 98 residues: Prolactin-releasing peptide (98 aa).

The signal sequence occupies residues 1 to 22 (MKAVGAWLLCLLLLGLALQGAA). Phe-53 carries the phenylalanine amide modification. A propeptide spanning residues 58-98 (AAPGDGPRPGPRRELACIPLEGGAEPSRALLGRLTAQLVQE) is cleaved from the precursor.

In terms of tissue distribution, more abundantly expressed in the brainstem than the hypothalamus.

It is found in the secreted. Stimulates prolactin (PRL) release and regulates the expression of prolactin through its receptor GPR10. May stimulate lactotrophs directly to secrete PRL. This is Prolactin-releasing peptide (PRLH) from Ovis aries (Sheep).